Reading from the N-terminus, the 437-residue chain is UDP-N-acetylmuramate--L-alanine ligase (437 aa).

Residue 108–114 (GAHGKTS) participates in ATP binding.

This sequence belongs to the MurCDEF family.

The protein localises to the cytoplasm. It carries out the reaction UDP-N-acetyl-alpha-D-muramate + L-alanine + ATP = UDP-N-acetyl-alpha-D-muramoyl-L-alanine + ADP + phosphate + H(+). It functions in the pathway cell wall biogenesis; peptidoglycan biosynthesis. Functionally, cell wall formation. In Staphylococcus aureus (strain JH9), this protein is UDP-N-acetylmuramate--L-alanine ligase.